We begin with the raw amino-acid sequence, 444 residues long: Protein cereblon (444 aa).

Positions Met1–Asp52 are disordered. The span at Ala23–Asp37 shows a compositional bias: acidic residues. In terms of domain architecture, Lon N-terminal spans Cys80 to Thr321. The CULT domain occupies Cys320–Ile428. Positions 325 and 328 each coordinate Zn(2+). Positions 380, 382, and 388 each coordinate (S)-thalidomide. The Zn(2+) site is built by Cys393 and Cys396.

This sequence belongs to the CRBN family. Component of a DCX (DDB1-CUL4-X-box) protein ligase complex, at least composed of CRBN, CUL4A, DDB1 and RBX1. Interacts directly with DDB1. Interacts with KCNT1. Interacts with ILF2. Interacts with TRAF6 and ECSIT. In terms of processing, ubiquitinated, ubiquitination is mediated by its own DCX protein ligase complex.

It is found in the cytoplasm. The protein localises to the nucleus. The protein resides in the membrane. The protein operates within protein modification; protein ubiquitination. Functionally, substrate recognition component of a DCX (DDB1-CUL4-X-box) E3 protein ligase complex that mediates the ubiquitination and subsequent proteasomal degradation of target proteins, such as MEIS2, ILF2 or GLUL. Normal degradation of key regulatory proteins is required for normal limb outgrowth and expression of the fibroblast growth factor FGF8. Maintains presynaptic glutamate release and consequently cognitive functions, such as memory and learning, by negatively regulating large-conductance calcium-activated potassium (BK) channels in excitatory neurons. Likely to function by regulating the assembly and neuronal surface expression of BK channels via its interaction with KCNT1. May also be involved in regulating anxiety-like behaviors via a BK channel-independent mechanism. Plays a negative role in TLR4 signaling by interacting with TRAF6 and ECSIT, leading to inhibition of ECSIT ubiquitination, an important step of the signaling. The polypeptide is Protein cereblon (CRBN) (Bos taurus (Bovine)).